The following is a 343-amino-acid chain: CRISPR-associated endonuclease Cas1 1 (343 aa).

Glutamate 166, histidine 234, and glutamate 249 together coordinate Mn(2+).

Belongs to the CRISPR-associated endonuclease Cas1 family. As to quaternary structure, homodimer, forms a heterotetramer with a Cas2 homodimer. Requires Mg(2+) as cofactor. The cofactor is Mn(2+).

Functionally, CRISPR (clustered regularly interspaced short palindromic repeat), is an adaptive immune system that provides protection against mobile genetic elements (viruses, transposable elements and conjugative plasmids). CRISPR clusters contain spacers, sequences complementary to antecedent mobile elements, and target invading nucleic acids. CRISPR clusters are transcribed and processed into CRISPR RNA (crRNA). Acts as a dsDNA endonuclease. Involved in the integration of spacer DNA into the CRISPR cassette. The polypeptide is CRISPR-associated endonuclease Cas1 1 (Moorella thermoacetica (strain ATCC 39073 / JCM 9320)).